A 138-amino-acid polypeptide reads, in one-letter code: Prefoldin subunit alpha (138 aa).

This sequence belongs to the prefoldin subunit alpha family. Heterohexamer of two alpha and four beta subunits.

It localises to the cytoplasm. In terms of biological role, molecular chaperone capable of stabilizing a range of proteins. Seems to fulfill an ATP-independent, HSP70-like function in archaeal de novo protein folding. In Methanosphaera stadtmanae (strain ATCC 43021 / DSM 3091 / JCM 11832 / MCB-3), this protein is Prefoldin subunit alpha.